The sequence spans 253 residues: Small ribosomal subunit protein uS5 (253 aa).

Positions 1–30 (MAESAPRGFGRGGRGGRGRGRGRRGAKRDE) are disordered. The span at 14–26 (RGGRGRGRGRRGA) shows a compositional bias: basic residues. Residues 75 to 138 (LNDEVMKVVP…IMGKLSIMPI (64 aa)) enclose the S5 DRBM domain.

The protein belongs to the universal ribosomal protein uS5 family. In terms of assembly, component of the small ribosomal subunit (SSU). Mature yeast ribosomes consist of a small (40S) and a large (60S) subunit. The 40S small subunit contains 1 molecule of ribosomal RNA (18S rRNA) and at least 33 different proteins. The large 60S subunit contains 3 rRNA molecules (25S, 5.8S and 5S rRNA) and at least 46 different proteins. Interacts with snoRNA U3. Interacts with MPP10. Component of the ribosomal small subunit (SSU) processome composed of at least 40 protein subunits and snoRNA U3.

It localises to the cytoplasm. Functionally, component of the ribosome, a large ribonucleoprotein complex responsible for the synthesis of proteins in the cell. The small ribosomal subunit (SSU) binds messenger RNAs (mRNAs) and translates the encoded message by selecting cognate aminoacyl-transfer RNA (tRNA) molecules. The large subunit (LSU) contains the ribosomal catalytic site termed the peptidyl transferase center (PTC), which catalyzes the formation of peptide bonds, thereby polymerizing the amino acids delivered by tRNAs into a polypeptide chain. The nascent polypeptides leave the ribosome through a tunnel in the LSU and interact with protein factors that function in enzymatic processing, targeting, and the membrane insertion of nascent chains at the exit of the ribosomal tunnel. Plays a role in the assembly and function of the 40S ribosomal subunit. Mutations in this protein affects the control of translational fidelity. Involved in nucleolar processing of pre-18S ribosomal RNA and ribosome assembly. In terms of biological role, component of the ribosome, a large ribonucleoprotein complex responsible for the synthesis of proteins in the cell. The small ribosomal subunit (SSU) binds messenger RNAs (mRNAs) and translates the encoded message by selecting cognate aminoacyl-transfer RNA (tRNA) molecules. The large subunit (LSU) contains the ribosomal catalytic site termed the peptidyl transferase center (PTC), which catalyzes the formation of peptide bonds, thereby polymerizing the amino acids delivered by tRNAs into a polypeptide chain. The nascent polypeptides leave the ribosome through a tunnel in the LSU and interact with protein factors that function in enzymatic processing, targeting, and the membrane insertion of nascent chains at the exit of the ribosomal tunnel. uS5 is important for the assembly and function of the 40S ribosomal subunit. Mutations in this protein affects the control of translational fidelity. Involved in nucleolar processing of pre-18S ribosomal RNA and ribosome assembly. This Schizosaccharomyces pombe (strain 972 / ATCC 24843) (Fission yeast) protein is Small ribosomal subunit protein uS5 (rps2).